The sequence spans 315 residues: Probable cell division protein WhiA (315 aa).

Residues 274–308 constitute a DNA-binding region (H-T-H motif); it reads SLKNLGELIPGGPISKSGINHRLRKLNEIAEKIRA.

The protein belongs to the WhiA family.

Functionally, involved in cell division and chromosome segregation. In Ligilactobacillus salivarius (strain UCC118) (Lactobacillus salivarius), this protein is Probable cell division protein WhiA.